The following is a 188-amino-acid chain: Peroxynitrite isomerase (188 aa).

Positions 35–41 match the GXWXGXG motif; that stretch reads GTWRGEG. A heme b-binding site is contributed by His178.

It belongs to the nitrobindin family. In terms of assembly, homodimer. Heme b is required as a cofactor.

It carries out the reaction peroxynitrite = nitrate. It functions in the pathway nitrogen metabolism. In terms of biological role, heme-binding protein able to scavenge peroxynitrite and to protect free L-tyrosine against peroxynitrite-mediated nitration, by acting as a peroxynitrite isomerase that converts peroxynitrite to nitrate. Therefore, this protein likely plays a role in peroxynitrite sensing and in the detoxification of reactive nitrogen and oxygen species (RNS and ROS, respectively). Is able to bind nitric oxide (NO) in vitro, but may act as a sensor of peroxynitrite levels in vivo. The sequence is that of Peroxynitrite isomerase from Frankia casuarinae (strain DSM 45818 / CECT 9043 / HFP020203 / CcI3).